The following is a 204-amino-acid chain: Large ribosomal subunit protein eL15 (204 aa).

Positions 155-204 (VHKHREQRGLTSAGRKSRGLGKGWRFSATRGGSQAKNWKRKNTKVFHRKR) are disordered. Positions 191 to 204 (NWKRKNTKVFHRKR) are enriched in basic residues.

Belongs to the eukaryotic ribosomal protein eL15 family.

This is Large ribosomal subunit protein eL15 (rpl-15) from Caenorhabditis elegans.